The following is an 817-amino-acid chain: U3 small nucleolar RNA-associated protein 13 (817 aa).

WD repeat units lie at residues glutamate 59 to lysine 100, serine 102 to serine 139, glycine 142 to glutamine 187, serine 191 to leucine 233, proline 238 to arginine 280, glycine 386 to aspartate 425, glycine 432 to aspartate 476, alanine 489 to threonine 528, asparagine 531 to glutamate 572, glycine 573 to aspartate 614, histidine 616 to glutamate 654, and glutamate 664 to serine 705.

In terms of assembly, interacts with snoRNA U3. Interacts with MPP10. Component of the ribosomal small subunit (SSU) processome composed of at least 40 protein subunits and snoRNA U3.

It is found in the nucleus. The protein resides in the nucleolus. In terms of biological role, involved in nucleolar processing of pre-18S ribosomal RNA. The chain is U3 small nucleolar RNA-associated protein 13 (UTP13) from Saccharomyces cerevisiae (strain ATCC 204508 / S288c) (Baker's yeast).